A 148-amino-acid polypeptide reads, in one-letter code: Multiprotein-bridging factor 1c (148 aa).

One can recognise an HTH cro/C1-type domain in the interval 91–145; the sequence is IQKARLEKKMSQADLAKQINERTQVVQEYENGKAVPNQAVLAKMEKVLGVKLRGK. The H-T-H motif DNA-binding region spans 102–121; it reads QADLAKQINERTQVVQEYEN.

Belongs to the MBF1 family. Binds to TPS5. Expressed in leaves, roots, stems, flowers, siliques and shoots. Not detected in seeds.

The protein localises to the nucleus. Its subcellular location is the nucleolus. It is found in the cytoplasm. Transcriptional coactivator that stimulates transcriptional activity by bridging regulatory proteins and TBP, thereby recruiting TBP to promoters occupied by DNA-binding regulators. Involved in the tolerance to heat and osmotic stress by partially activating the ethylene-response signal transduction pathway. In Arabidopsis thaliana (Mouse-ear cress), this protein is Multiprotein-bridging factor 1c (MBF1C).